A 121-amino-acid chain; its full sequence is MILNNKGFIRILEATIAGIMVILVFSYLVMSQNFDYNLSLEFIGYNALYSAHIEEGDFENISSLYKKIELPSNVGYGFEIYKNGNLIYSDAKNGVVVERNFIFENNTSVNFYKLRLILWWR.

A signal peptide spans 1–31; that stretch reads MILNNKGFIRILEATIAGIMVILVFSYLVMS.

It to B.burgdorferi BB0465 N-terminal region.

This is an uncharacterized protein from Methanocaldococcus jannaschii (strain ATCC 43067 / DSM 2661 / JAL-1 / JCM 10045 / NBRC 100440) (Methanococcus jannaschii).